We begin with the raw amino-acid sequence, 486 residues long: Protein DETOXIFICATION 16 (486 aa).

12 helical membrane-spanning segments follow: residues 35–55 (GPLI…VMFV), 68–88 (IATS…ASAL), 117–137 (LASI…VFFG), 142–162 (IATL…AYGL), 179–199 (VVFC…VLVF), 207–227 (GAAL…FCYV), 259–279 (ALMV…SGLL), 288–308 (VLSI…GLSG), 331–351 (RVVI…LILI), 365–385 (VVSY…LDSL), 401–421 (IGAI…GLLL), and 433–453 (WLGI…VTIF).

This sequence belongs to the multi antimicrobial extrusion (MATE) (TC 2.A.66.1) family.

Its subcellular location is the membrane. In Arabidopsis thaliana (Mouse-ear cress), this protein is Protein DETOXIFICATION 16.